The following is a 213-amino-acid chain: 3-hexulose-6-phosphate synthase 2 (213 aa).

Belongs to the HPS/KGPDC family. HPS subfamily.

The catalysed reaction is D-ribulose 5-phosphate + formaldehyde = D-arabino-hex-3-ulose 6-phosphate. Its pathway is one-carbon metabolism; formaldehyde assimilation via RuMP pathway; D-fructose 6-phosphate from D-ribulose 5-phosphate and formaldehyde: step 1/2. Functionally, catalyzes the condensation of ribulose 5-phosphate with formaldehyde to form 3-hexulose 6-phosphate. This is 3-hexulose-6-phosphate synthase 2 from Staphylococcus saprophyticus subsp. saprophyticus (strain ATCC 15305 / DSM 20229 / NCIMB 8711 / NCTC 7292 / S-41).